Here is a 213-residue protein sequence, read N- to C-terminus: Imidazoleglycerol-phosphate dehydratase (213 aa).

The protein belongs to the imidazoleglycerol-phosphate dehydratase family.

It localises to the cytoplasm. The enzyme catalyses D-erythro-1-(imidazol-4-yl)glycerol 3-phosphate = 3-(imidazol-4-yl)-2-oxopropyl phosphate + H2O. The protein operates within amino-acid biosynthesis; L-histidine biosynthesis; L-histidine from 5-phospho-alpha-D-ribose 1-diphosphate: step 6/9. The protein is Imidazoleglycerol-phosphate dehydratase of Trichodesmium erythraeum (strain IMS101).